Here is a 255-residue protein sequence, read N- to C-terminus: 4-hydroxy-tetrahydrodipicolinate reductase (255 aa).

Residues 9 to 14 (GFKGRM), 89 to 91 (GTT), and 115 to 118 (APNF) each bind NAD(+). Histidine 145 serves as the catalytic Proton donor/acceptor. A (S)-2,3,4,5-tetrahydrodipicolinate-binding site is contributed by histidine 146. The active-site Proton donor is the lysine 149. 155–156 (GT) serves as a coordination point for (S)-2,3,4,5-tetrahydrodipicolinate.

It belongs to the DapB family.

It localises to the cytoplasm. It carries out the reaction (S)-2,3,4,5-tetrahydrodipicolinate + NAD(+) + H2O = (2S,4S)-4-hydroxy-2,3,4,5-tetrahydrodipicolinate + NADH + H(+). The catalysed reaction is (S)-2,3,4,5-tetrahydrodipicolinate + NADP(+) + H2O = (2S,4S)-4-hydroxy-2,3,4,5-tetrahydrodipicolinate + NADPH + H(+). Its pathway is amino-acid biosynthesis; L-lysine biosynthesis via DAP pathway; (S)-tetrahydrodipicolinate from L-aspartate: step 4/4. Catalyzes the conversion of 4-hydroxy-tetrahydrodipicolinate (HTPA) to tetrahydrodipicolinate. The chain is 4-hydroxy-tetrahydrodipicolinate reductase from Streptococcus mutans serotype c (strain ATCC 700610 / UA159).